The chain runs to 337 residues: Protein-methionine-sulfoxide reductase catalytic subunit MsrP (337 aa).

Positions 1-54 form a signal peptide, tat-type signal; it reads MLIKLPRSSECKASEITPEGIYLSRRTLLGGSLAGLALGALPGGVGAAQMSRYA. Mo-molybdopterin contacts are provided by residues N94, 97–98, C152, T187, N237, R242, and 253–255; these read YE and SIK.

It belongs to the MsrP family. As to quaternary structure, heterodimer of a catalytic subunit (MsrP) and a heme-binding subunit (MsrQ). It depends on Mo-molybdopterin as a cofactor. In terms of processing, predicted to be exported by the Tat system. The position of the signal peptide cleavage has not been experimentally proven.

It is found in the periplasm. The catalysed reaction is L-methionyl-[protein] + a quinone + H2O = L-methionyl-(S)-S-oxide-[protein] + a quinol. It catalyses the reaction L-methionyl-[protein] + a quinone + H2O = L-methionyl-(R)-S-oxide-[protein] + a quinol. Its function is as follows. Part of the MsrPQ system that repairs oxidized periplasmic proteins containing methionine sulfoxide residues (Met-O), using respiratory chain electrons. Thus protects these proteins from oxidative-stress damage caused by reactive species of oxygen and chlorine generated by the host defense mechanisms. MsrPQ is essential for the maintenance of envelope integrity under bleach stress, rescuing a wide series of structurally unrelated periplasmic proteins from methionine oxidation. The catalytic subunit MsrP is non-stereospecific, being able to reduce both (R-) and (S-) diastereoisomers of methionine sulfoxide. This chain is Protein-methionine-sulfoxide reductase catalytic subunit MsrP, found in Pseudomonas putida (strain ATCC 47054 / DSM 6125 / CFBP 8728 / NCIMB 11950 / KT2440).